We begin with the raw amino-acid sequence, 239 residues long: Venom nerve growth factor (239 aa).

The N-terminal stretch at 1 to 18 is a signal peptide; it reads MSMLCYTLIIAFLIGIWA. A propeptide spanning residues 19–125 is cleaved from the precursor; the sequence is APKSEDNVPL…ALNRNIQAKR (107 aa). Basic and acidic residues predominate over residues 47 to 66; that stretch reads GLKTSRNTDQRHPAPKKADD. Residues 47–68 form a disordered region; the sequence is GLKTSRNTDQRHPAPKKADDQE. 3 disulfide bridges follow: Cys-139–Cys-203, Cys-181–Cys-231, and Cys-191–Cys-233.

The protein belongs to the NGF-beta family. As to quaternary structure, homodimer; non-covalently linked. As to expression, expressed by the venom gland.

It localises to the secreted. Its function is as follows. Nerve growth factor is important for the development and maintenance of the sympathetic and sensory nervous systems. It stimulates division and differentiation of sympathetic and embryonic sensory neurons as well as basal forebrain cholinergic neurons in the brain. Its relevance in the snake venom is not clear. However, it has been shown to inhibit metalloproteinase-dependent proteolysis of platelet glycoprotein Ib alpha, suggesting a metalloproteinase inhibition to prevent metalloprotease autodigestion and/or protection against prey proteases. Binds a lipid between the two protein chains in the homodimer. The lipid-bound form promotes histamine relase from mouse mast cells, contrary to the lipid-free form. In Pseudechis porphyriacus (Red-bellied black snake), this protein is Venom nerve growth factor.